The following is a 681-amino-acid chain: Macrolide export ATP-binding/permease protein MacB (681 aa).

The region spanning 6 to 244 is the ABC transporter domain; it reads LKLAAVTRRF…FAEVGVGAAA (239 aa). ATP is bound at residue 42–49; sequence GASGSGKS. Residues 246–273 show a composition bias toward low complexity; it reads TETAADTRSAPASGDAPPPANNDTAADP. A disordered region spans residues 246–298; that stretch reads TETAADTRSAPASGDAPPPANNDTAADPAPAPDASPPAPAVSPKHAGWRGSRS. Positions 274-285 are enriched in pro residues; that stretch reads APAPDASPPAPA. Helical transmembrane passes span 306–326, 554–574, 611–631, and 644–664; these read CLTM…VAVG, LTLL…IGVM, LVCL…GALF, and AGAI…FGFM.

Belongs to the ABC transporter superfamily. Macrolide exporter (TC 3.A.1.122) family. As to quaternary structure, homodimer.

It is found in the cell inner membrane. Its function is as follows. Non-canonical ABC transporter that contains transmembrane domains (TMD), which form a pore in the inner membrane, and an ATP-binding domain (NBD), which is responsible for energy generation. Confers resistance against macrolides. The polypeptide is Macrolide export ATP-binding/permease protein MacB (Burkholderia orbicola (strain AU 1054)).